A 91-amino-acid chain; its full sequence is Mercuric transport protein periplasmic component (91 aa).

An N-terminal signal peptide occupies residues 1-19 (MKKLFASLALAAFVAPVFA). The HMA domain occupies 22–88 (QTVTLSVPGM…ATEDAGYPSS (67 aa)). The Hg(2+) site is built by cysteine 33 and cysteine 36.

Belongs to the MerP family. Monomer.

It localises to the periplasm. Its function is as follows. Involved in mercury resistance. Acts as a mercury scavenger that specifically binds to a mercuric ion in the periplasm and probably passes it to the cytoplasmic mercuric reductase MerA via the mercuric transport protein MerT. This is Mercuric transport protein periplasmic component from Acinetobacter calcoaceticus.